We begin with the raw amino-acid sequence, 98 residues long: Venom toxin OcyC11 (98 aa).

A signal peptide spans 1–20; that stretch reads MKIACTLVLFVMLRCYVNAR.

In terms of processing, contains 4 disulfide bonds. In terms of tissue distribution, expressed by the venom gland.

The protein resides in the secreted. In Opisthacanthus cayaporum (South American scorpion), this protein is Venom toxin OcyC11.